A 330-amino-acid polypeptide reads, in one-letter code: Peroxidase 55 (330 aa).

The signal sequence occupies residues 1–30 (MDIRSDDAKKPMMMWFLGMLLFSMVAESNA). Intrachain disulfides connect cysteine 41/cysteine 121, cysteine 74/cysteine 79, cysteine 127/cysteine 326, and cysteine 206/cysteine 238. Residue histidine 72 is the Proton acceptor of the active site. The Ca(2+) site is built by aspartate 73, valine 76, glycine 78, aspartate 80, and serine 82. Residue proline 169 coordinates substrate. Histidine 199 is a heme b binding site. Threonine 200 serves as a coordination point for Ca(2+). N-linked (GlcNAc...) asparagine glycosylation is present at asparagine 215. 3 residues coordinate Ca(2+): aspartate 250, serine 253, and aspartate 258.

This sequence belongs to the peroxidase family. Classical plant (class III) peroxidase subfamily. Heme b is required as a cofactor. Ca(2+) serves as cofactor. In terms of tissue distribution, slightly expressed in roots.

The protein localises to the secreted. The enzyme catalyses 2 a phenolic donor + H2O2 = 2 a phenolic radical donor + 2 H2O. In terms of biological role, removal of H(2)O(2), oxidation of toxic reductants, biosynthesis and degradation of lignin, suberization, auxin catabolism, response to environmental stresses such as wounding, pathogen attack and oxidative stress. These functions might be dependent on each isozyme/isoform in each plant tissue. This Arabidopsis thaliana (Mouse-ear cress) protein is Peroxidase 55 (PER55).